The sequence spans 189 residues: Cancer/testis antigen family 45 member A3 (189 aa).

The tract at residues 81–119 (KDRMMQKPGSNAPVGGNVTSSFSGDDLECRETASSPKSQ) is disordered.

The protein belongs to the CT45 family. As to expression, testis specific. Expressed in cancer cell lines.

It is found in the nucleus. The sequence is that of Cancer/testis antigen family 45 member A3 from Homo sapiens (Human).